Consider the following 367-residue polypeptide: MRLISPALVVSTAIQARHVNSSAPVDSAMTEANPLASAHPPDVGYDGVPAGRVRNPDDPTTEERTPGESFMEAINFKIFKLVQEAQGRILGLPEQPRGDMEWLERYGQDAILHYLETGDKDPSQLEKKYDQLLDELKNAPNLEVEILESIHALFLAYMEEVAKPAVQTTPKLNEQPDKFAWAMINKARRNAKPGIRNPYKSLNIPLVENYIKKYNAFIELRQRELTLLDTFSCAFNHNTVKLAKFLAMVDTFSPKRTFVLAMRIELSEIWIEEKRTIAEVASILGISTITGYAKNRLSAGTFVRFIYQLAKTNEQLGPDIVKDLVKTFGPDRTTELLTRMKTVSPRMFTILKDHMDVRLKETGVTPN.

The signal sequence occupies residues Met-1–Ala-16. N-linked (GlcNAc...) asparagine glycosylation is present at Asn-20. Residues Asn-33 to Thr-65 are disordered. Positions Arg-54–Thr-65 are enriched in basic and acidic residues. The dEER signature appears at Thr-61–Arg-64.

This sequence belongs to the RxLR effector family.

The protein localises to the secreted. The protein resides in the host cell. Secreted effector that acts as an elicitor of hypersensitive response (HR) specifically on plants carrying defense protein RPP5. The chain is Avirulence protein ATR5 from Hyaloperonospora arabidopsidis (strain Emoy2) (Downy mildew agent).